The following is a 481-amino-acid chain: UDP-glycosyltransferase 85A2 (481 aa).

UDP-alpha-D-glucose is bound by residues Ser-303, 360–362, 377–385, and 399–402; these read CPQ, HCGWNSTLE, and FAEQ.

It belongs to the UDP-glycosyltransferase family. Expressed in roots, shoots, leaves and flowers.

This Arabidopsis thaliana (Mouse-ear cress) protein is UDP-glycosyltransferase 85A2 (UGT85A2).